The sequence spans 1805 residues: MKASSGDQGSPPCFLRFPRPVRVVSGAEAELKCVVLGEPPPTVLWEKGGQQLVASERLSFPEDGAEHGLLLSGALPTDAGVYVCRARNAAGEAYAAAAVTVLEPPAPEPEPQSSECPPPPPGTGEGAPVFLTGPQSQWVLRGAEVVLTCQVGGLPEPKLYWEKDGMALDEVWDSSHYTLEPDRGASDGGASLTLRILAARLPDSGVYVCHARNAHGHAQAGALLQVHQPHENPPQDPDEPPVRVIEPLKCAPKTFWVNEGKHAKFRCYVMGKPEPEIEWHLEGRPLLPDRRRLMYRDRDGGFVLKVLYCQAKDRGLYVCAARNSAGQTLSAVQLHVKEPRLRFTRPLQDVEGREHGIVVLECKVPNSRIPTAWFREDQRLLPCRKYEQIEEGTVRRLVIHRLKADDDGVYLCEMRGRVRTVANVTVKGPILKRLPRKLDVLEGENAVLLVETQEAGVQGCWSRDGEELPATCQSSCGHMHALVLPGVTREDAGEVTFSLGNSRTTTLLRVKCVKHSPPGPPVLVEMFKGQKNTVLLTWKPPEPPPETSFIYRLERQEVGSEDWIQCFSIEKAGAVEVPGDCVPTEGDYRFRICTVSEHGRSPHVVFNGSAHLVPTARLVSGLEDVQVYDGEDAVFSLDLSTIIQGSWFLNGELLKNDEAEGQVEPGALRYRIEQKGLQHRLILQTVKHQDNGALVGFICPGVQDSAALSIQESPVHILSPQDKVLLTFTTSERVVLTCELSRVDFPATWYKDGQKVEESESLVVKMDGRKHRLILPEAQVRDSGEFECRTEGISAFFSVTVQDPPVHIVDPQEHVFVHAITSESVMLTCEVDREDAAVHWYKDGQEVEESAVIVLEKEGPRHRLVLPAAQPSDGGEFQCVVGDERAYFTVTITDVSSWIVYPNGKVYVAAVRLERVVLTCELCRPWAEVRWTKDGEEVLESPALLLEKEDTIRRLVLPSVQLEDSGEYLCEIHDESASFTITVTEPPVRIIYPQDEVTLHAVSLECVVLTCELSRVDAPVRWYKDGLEVEETEALVLQSDGPRRRLVLPAAQPEDGGEFVCDAGDDSAFFTVTVTAPPERIVHPVARSLDLQFGAPGHVELRCEVAPAGSQVRWYKDGLEVEVSDALQLGAEGPARTLTLPHAQPEDAGEYVCETRDEAVTFNVSLAELPVQFLAPEAVPNPLCVVPGEPVMLSCELSRASAHVSWSHNGNPVKQGEGLELRAEGPRRILCIQAADLAHTGVYTCQSGTAPGAPSLSFNVQVAEPPPVKLVSELTPLTVHEGDDATFQCEVSPPDAEVTWLRNGAIVTPGPQLEMVHSGSSRTLIIRGCQLKDAGTVTARAGATDTSARLHVRETELLFLRRLQDVRAEEGQDVYLEVETGRVGAPGAVRWLRGGEPLPLDSRLTTAQDGHVHRLSIHGVLLTDQGTYGCESHHDRTLARLSVRPRQLRELRPLEDVTVHEGGSATFQLELSQEGVTGEWAQGGVRLHPGPKCHIHSEGRTHCLVLSGLGLADSGCISFTADTLRCAARLTVREVPVTIVQGPQDLEVTEGDTATFECELSQTLADVIWEKDGQALSLSPRLRLQSLGTRRLLLLRRCSSSDAGTYCCAVGTARSGPARLTVREREVSVLGELRSLSAREGDSATFECTVSESETTGRWELGGRALRPGGRVRIRQEGKKHILVLSELRTEDTGEVCFQAGPAQSLARLEVEALPLQMCRRPPREKTVLVDRRAVLEVTVSRPGGHVCWMREGVELCPGSKYEMRSHGTTHSLVIHDVRPEDQGTYSCQAGQDSADTQLLVEGDD.

At Ser-10 the chain carries Phosphoserine. The Ig-like 1 domain occupies 12 to 100 (PCFLRFPRPV…GEAYAAAAVT (89 aa)). The tract at residues 17-19 (FPR) is interaction with TTN. A disulfide bridge links Cys-33 with Cys-84. The tract at residues 85 to 94 (RARNAAGEAY) is interaction with TTN. The span at 104–122 (PPAPEPEPQSSECPPPPPG) shows a compositional bias: pro residues. The tract at residues 104–131 (PPAPEPEPQSSECPPPPPGTGEGAPVFL) is disordered. 3 Ig-like domains span residues 128–225 (PVFL…ALLQ), 240–330 (PPVR…QTLS), and 339–425 (PRLR…ANVT). 3 disulfide bridges follow: Cys-149–Cys-209, Cys-267–Cys-319, and Cys-362–Cys-412. The 99-residue stretch at 517 to 615 (PPGPPVLVEM…FNGSAHLVPT (99 aa)) folds into the Fibronectin type-III domain. 10 Ig-like domains span residues 720–800 (PQDK…FSVT), 804–891 (PPVH…FTVT), 902–982 (PNGK…FTIT), 986–1075 (PPVR…VTVT), 1078–1165 (PERI…FNVS), 1176–1261 (PEAV…FNVQ), 1266–1351 (PPVK…ARLH), 1355–1442 (TELL…ARLS), 1536–1628 (PVTI…REVS), and 1702–1798 (PAQS…ADTQ). Intrachain disulfides connect Cys-738-Cys-788, Cys-829-Cys-879, Cys-920-Cys-970, Cys-1011-Cys-1061, Cys-1103-Cys-1153, and Cys-1195-Cys-1245. A disulfide bridge connects residues Cys-1558 and Cys-1608.

As to quaternary structure, component of the 3M complex, composed of core components CUL7, CCDC8 and OBSL1. Interacts with CCDC8. Interacts with CUL7; the interaction is direct. Interacts with FBXW8. Interacts (via N-terminal Ig-like domain) with TTN/titin (via C-terminal Ig-like domain); the interaction is direct. As to expression, expressed in granule neurons, with levels decreasing with neuronal maturation.

It is found in the cytoplasm. The protein resides in the perinuclear region. It localises to the golgi apparatus. In terms of biological role, core component of the 3M complex, a complex required to regulate microtubule dynamics and genome integrity. It is unclear how the 3M complex regulates microtubules, it could act by controlling the level of a microtubule stabilizer. Acts as a regulator of the Cul7-RING(FBXW8) ubiquitin-protein ligase, playing a critical role in the ubiquitin ligase pathway that regulates Golgi morphogenesis and dendrite patterning in brain. Required to localize CUL7 to the Golgi apparatus in neurons. In Rattus norvegicus (Rat), this protein is Obscurin-like protein 1 (Obsl1).